A 222-amino-acid chain; its full sequence is Phosphoglycolate phosphatase (222 aa).

Catalysis depends on Asp-12, which acts as the Nucleophile. 3 residues coordinate Mg(2+): Asp-12, Asp-14, and Asp-175.

It belongs to the HAD-like hydrolase superfamily. CbbY/CbbZ/Gph/YieH family. Mg(2+) is required as a cofactor.

It catalyses the reaction 2-phosphoglycolate + H2O = glycolate + phosphate. It functions in the pathway organic acid metabolism; glycolate biosynthesis; glycolate from 2-phosphoglycolate: step 1/1. Functionally, specifically catalyzes the dephosphorylation of 2-phosphoglycolate. Is involved in the dissimilation of the intracellular 2-phosphoglycolate formed during the DNA repair of 3'-phosphoglycolate ends, a major class of DNA lesions induced by oxidative stress. The protein is Phosphoglycolate phosphatase of Chromobacterium violaceum (strain ATCC 12472 / DSM 30191 / JCM 1249 / CCUG 213 / NBRC 12614 / NCIMB 9131 / NCTC 9757 / MK).